Here is a 1073-residue protein sequence, read N- to C-terminus: Error-prone DNA polymerase (1073 aa).

The segment at 41–73 (EAEPECLSTPRPGPGSTEVPGERRGSRQGERSG) is disordered. Over residues 60–73 (PGERRGSRQGERSG) the composition is skewed to basic and acidic residues.

The protein belongs to the DNA polymerase type-C family. DnaE2 subfamily.

The protein resides in the cytoplasm. The enzyme catalyses DNA(n) + a 2'-deoxyribonucleoside 5'-triphosphate = DNA(n+1) + diphosphate. DNA polymerase involved in damage-induced mutagenesis and translesion synthesis (TLS). It is not the major replicative DNA polymerase. The polypeptide is Error-prone DNA polymerase (Corynebacterium efficiens (strain DSM 44549 / YS-314 / AJ 12310 / JCM 11189 / NBRC 100395)).